The following is a 122-amino-acid chain: Large ribosomal subunit protein bL20 (122 aa).

The protein belongs to the bacterial ribosomal protein bL20 family.

Its function is as follows. Binds directly to 23S ribosomal RNA and is necessary for the in vitro assembly process of the 50S ribosomal subunit. It is not involved in the protein synthesizing functions of that subunit. This Treponema pallidum (strain Nichols) protein is Large ribosomal subunit protein bL20 (rplT).